Reading from the N-terminus, the 317-residue chain is WD repeat-containing protein 82 (317 aa).

WD repeat units lie at residues 21 to 60, 107 to 146, 148 to 186, 194 to 233, 238 to 278, and 282 to 317; these read ENTDKINAIDFAPNGEHLISCSEDDQIVIYDCEKGTQSRT, GHTKKVISLCISPVEDTFLSGSLDKTLRLWDLRSPNCQGL, HLSGRPIAAYDPEGLIFAAGVNSESIKLYDLRSFDKGPF, EKECDWTGLKFSRDGKTILISTNGSVIRLVDAFHGTPLQT, PNNK…KVSV, and DHPGPVQCVQFNPKYMMLASACTNMAFWLPTSEEGL.

It belongs to the WD repeat SWD2 family. In terms of assembly, component of the SET1 complex, composed at least of the catalytic subunit Set1, wds/WDR5, Wdr82, Rbbp5, ash2, Cfp1/CXXC1, hcf and Dpy-30L1. Interacts with male-specific lethal (MSL) histone acetyltransferase complex at least composed of mof, msl-1, msl-2 and msl-3. Interacts with su(sable).

It localises to the nucleus. Component of the SET1 complex that specifically di- and trimethylates 'Lys-4' of histone H3. Together with su(sable), part of a transcription termination checkpoint that promotes transcription termination of aberrant RNAs and their subsequent degradation by the nuclear exosome. In Drosophila melanogaster (Fruit fly), this protein is WD repeat-containing protein 82.